Here is a 434-residue protein sequence, read N- to C-terminus: Trigger factor (434 aa).

The PPIase FKBP-type domain occupies 160-245; that stretch reads GDKVKMNFVG…LTEVLAANLP (86 aa).

The protein belongs to the FKBP-type PPIase family. Tig subfamily.

Its subcellular location is the cytoplasm. The enzyme catalyses [protein]-peptidylproline (omega=180) = [protein]-peptidylproline (omega=0). In terms of biological role, involved in protein export. Acts as a chaperone by maintaining the newly synthesized protein in an open conformation. Functions as a peptidyl-prolyl cis-trans isomerase. This Shewanella sp. (strain ANA-3) protein is Trigger factor.